The sequence spans 143 residues: Small ribosomal subunit protein uS12 (143 aa).

Residues 1–20 are compositionally biased toward basic residues; that stretch reads MGKPRGLRTARKHRSHRRDQ. The segment at 1–26 is disordered; sequence MGKPRGLRTARKHRSHRRDQRWHDKD. Pro62 carries the hydroxyproline modification.

The protein belongs to the universal ribosomal protein uS12 family. As to quaternary structure, component of the 40S small ribosomal subunit.

It is found in the cytoplasm. The protein resides in the cytosol. The protein localises to the rough endoplasmic reticulum. This Dermacentor variabilis (American dog tick) protein is Small ribosomal subunit protein uS12 (RpS23).